We begin with the raw amino-acid sequence, 266 residues long: Glucosamine-6-phosphate deaminase (266 aa).

The active-site Proton acceptor; for enolization step is the Asp72. Asp141 acts as the For ring-opening step in catalysis. Residue His143 is the Proton acceptor; for ring-opening step of the active site. The active-site For ring-opening step is Glu148.

The protein belongs to the glucosamine/galactosamine-6-phosphate isomerase family. NagB subfamily. Homohexamer.

The catalysed reaction is alpha-D-glucosamine 6-phosphate + H2O = beta-D-fructose 6-phosphate + NH4(+). Its pathway is amino-sugar metabolism; N-acetylneuraminate degradation; D-fructose 6-phosphate from N-acetylneuraminate: step 5/5. Allosterically activated by N-acetylglucosamine 6-phosphate (GlcNAc6P). Its function is as follows. Catalyzes the reversible isomerization-deamination of glucosamine 6-phosphate (GlcN6P) to form fructose 6-phosphate (Fru6P) and ammonium ion. This chain is Glucosamine-6-phosphate deaminase, found in Salmonella typhi.